A 297-amino-acid polypeptide reads, in one-letter code: MAFPKMRLMYVCLLVLGALCVYFSMYSLNLFKEQSFVYKKDGNFLKLPDTDCRQTPPFLVLLVTSSHRQLAERMAIRQTWGKERTVKGKQLKTFFLLGTTSSAAETKEVDQESQRHGDIIQKDFLDVYYNLTLKTMMGIEWVHRFCPQAAFVMKTDSDMFINVDYLTELLLKKNRTTRFFTGFLKLNEFPIRQPFSKWFVSKSEYPWDRYPPFCSGTGYVFSGDVASQVYNVSESVPYIKLEDVFVGLCLERLNIRLEELHSQPTFFPGGLRFSVCRFRRIVACHFIKPRTLLDYWQ.

The Cytoplasmic segment spans residues 1 to 7 (MAFPKMR). A helical; Signal-anchor for type II membrane protein transmembrane segment spans residues 8–28 (LMYVCLLVLGALCVYFSMYSL). The Lumenal portion of the chain corresponds to 29 to 297 (NLFKEQSFVY…KPRTLLDYWQ (269 aa)). 3 N-linked (GlcNAc...) asparagine glycosylation sites follow: Asn-130, Asn-174, and Asn-231.

The protein belongs to the glycosyltransferase 31 family.

The protein localises to the golgi apparatus membrane. It catalyses the reaction a globoside Gb4Cer (d18:1(4E)) + UDP-alpha-D-galactose = a globoside GalGb4Cer (d18:1(4E)) + UDP + H(+). The protein operates within protein modification; protein glycosylation. Functionally, catalyzes the transfer of Gal to GlcNAc-based acceptors with a preference for the core3 O-linked glycan GlcNAc(beta1,3)GalNAc structure. Can use glycolipid LC3Cer as an efficient acceptor. The sequence is that of Beta-1,3-galactosyltransferase 5 (B3GALT5) from Pan troglodytes (Chimpanzee).